A 254-amino-acid polypeptide reads, in one-letter code: Leucyl/phenylalanyl-tRNA--protein transferase (254 aa).

The protein belongs to the L/F-transferase family.

It is found in the cytoplasm. It catalyses the reaction N-terminal L-lysyl-[protein] + L-leucyl-tRNA(Leu) = N-terminal L-leucyl-L-lysyl-[protein] + tRNA(Leu) + H(+). It carries out the reaction N-terminal L-arginyl-[protein] + L-leucyl-tRNA(Leu) = N-terminal L-leucyl-L-arginyl-[protein] + tRNA(Leu) + H(+). The catalysed reaction is L-phenylalanyl-tRNA(Phe) + an N-terminal L-alpha-aminoacyl-[protein] = an N-terminal L-phenylalanyl-L-alpha-aminoacyl-[protein] + tRNA(Phe). Its function is as follows. Functions in the N-end rule pathway of protein degradation where it conjugates Leu, Phe and, less efficiently, Met from aminoacyl-tRNAs to the N-termini of proteins containing an N-terminal arginine or lysine. The chain is Leucyl/phenylalanyl-tRNA--protein transferase from Burkholderia vietnamiensis (strain G4 / LMG 22486) (Burkholderia cepacia (strain R1808)).